A 650-amino-acid chain; its full sequence is Methionine--tRNA ligase (650 aa).

A 'HIGH' region motif is present at residues Tyr11 to His21. Zn(2+) is bound by residues Cys126, Cys129, Cys147, and Cys150. Residues Lys301–Ser305 carry the 'KMSKS' region motif. Lys304 lines the ATP pocket. A disordered region spans residues Glu513–Glu535. Residues Asp549 to Ser650 form the tRNA-binding domain.

This sequence belongs to the class-I aminoacyl-tRNA synthetase family. MetG type 2A subfamily. In terms of assembly, homodimer. It depends on Zn(2+) as a cofactor.

Its subcellular location is the cytoplasm. The catalysed reaction is tRNA(Met) + L-methionine + ATP = L-methionyl-tRNA(Met) + AMP + diphosphate. Its function is as follows. Is required not only for elongation of protein synthesis but also for the initiation of all mRNA translation through initiator tRNA(fMet) aminoacylation. This Helicobacter pylori (strain ATCC 700392 / 26695) (Campylobacter pylori) protein is Methionine--tRNA ligase (metG).